The sequence spans 52 residues: Insulin (52 aa).

Intrachain disulfides connect Cys9–Cys38, Cys21–Cys51, and Cys37–Cys42.

Belongs to the insulin family. In terms of assembly, heterodimer of a B chain and an A chain linked by two disulfide bonds.

It is found in the secreted. Its function is as follows. Insulin decreases blood glucose concentration. It increases cell permeability to monosaccharides, amino acids and fatty acids. It accelerates glycolysis, the pentose phosphate cycle, and glycogen synthesis in liver. This chain is Insulin (ins), found in Piaractus mesopotamicus (Small-scaled pacu).